The primary structure comprises 61 residues: Large ribosomal subunit protein bL32 (61 aa).

Over residues 1-16 (MAVPKRKTSPSKRGMR) the composition is skewed to basic residues. Residues 1-61 (MAVPKRKTSP…RSVLTPKNSG (61 aa)) form a disordered region. Residues 28–44 (VEDKDSGELRRPHHIDL) show a composition bias toward basic and acidic residues.

It belongs to the bacterial ribosomal protein bL32 family.

In Bartonella bacilliformis (strain ATCC 35685 / KC583 / Herrer 020/F12,63), this protein is Large ribosomal subunit protein bL32.